The following is a 515-amino-acid chain: Rop guanine nucleotide exchange factor 12 (515 aa).

A PRONE domain is found at 83 to 446 (QARERQLLAD…RAGNKRNTPL (364 aa)). Ser510 carries the post-translational modification Phosphoserine.

As to quaternary structure, interacts (via C-terminus) with PRK2. Interacts with PRK6. As to expression, expressed in pollen grains.

The protein resides in the cytoplasm. It is found in the cell membrane. Its activity is regulated as follows. Phosphorylation at Ser-510 by PRK2 may release ROPGEF12 auto-inhibition, thereby activating ROPGEF12 and downstream Rop signaling. Its function is as follows. Guanine-nucleotide exchange factor (GEF) that acts as an activator of Rop (Rho of plants) GTPases by promoting the exchange of GDP for GTP. May be recruited by PRK2 at the plasma membrane to maintain polar Rop activity in the pollen tube and control polarized pollen tube growth. The polypeptide is Rop guanine nucleotide exchange factor 12 (Arabidopsis thaliana (Mouse-ear cress)).